The primary structure comprises 606 residues: Elongation factor 4 (606 aa).

Positions 11–193 constitute a tr-type G domain; sequence PHIRNFSIIA…RLVRDVPPPK (183 aa). GTP is bound by residues 23–28 and 140–143; these read DHGKST and NKMD.

It belongs to the TRAFAC class translation factor GTPase superfamily. Classic translation factor GTPase family. LepA subfamily.

The protein localises to the cell inner membrane. The enzyme catalyses GTP + H2O = GDP + phosphate + H(+). Functionally, required for accurate and efficient protein synthesis under certain stress conditions. May act as a fidelity factor of the translation reaction, by catalyzing a one-codon backward translocation of tRNAs on improperly translocated ribosomes. Back-translocation proceeds from a post-translocation (POST) complex to a pre-translocation (PRE) complex, thus giving elongation factor G a second chance to translocate the tRNAs correctly. Binds to ribosomes in a GTP-dependent manner. The sequence is that of Elongation factor 4 from Chromohalobacter salexigens (strain ATCC BAA-138 / DSM 3043 / CIP 106854 / NCIMB 13768 / 1H11).